Here is a 425-residue protein sequence, read N- to C-terminus: Trigger factor (425 aa).

In terms of domain architecture, PPIase FKBP-type spans 158–231; sequence GDLVRVNMEV…VEEVYKRTLP (74 aa).

This sequence belongs to the FKBP-type PPIase family. Tig subfamily.

The protein resides in the cytoplasm. The catalysed reaction is [protein]-peptidylproline (omega=180) = [protein]-peptidylproline (omega=0). Its function is as follows. Involved in protein export. Acts as a chaperone by maintaining the newly synthesized protein in an open conformation. Functions as a peptidyl-prolyl cis-trans isomerase. In Thermotoga petrophila (strain ATCC BAA-488 / DSM 13995 / JCM 10881 / RKU-1), this protein is Trigger factor.